Reading from the N-terminus, the 97-residue chain is Large ribosomal subunit protein uL23 (97 aa).

It belongs to the universal ribosomal protein uL23 family. Part of the 50S ribosomal subunit. Contacts protein L29, and trigger factor when it is bound to the ribosome.

In terms of biological role, one of the early assembly proteins it binds 23S rRNA. One of the proteins that surrounds the polypeptide exit tunnel on the outside of the ribosome. Forms the main docking site for trigger factor binding to the ribosome. The polypeptide is Large ribosomal subunit protein uL23 (Pelagibacter ubique (strain HTCC1062)).